The chain runs to 135 residues: Small ribosomal subunit protein eS6 (135 aa).

The protein belongs to the eukaryotic ribosomal protein eS6 family.

This is Small ribosomal subunit protein eS6 from Methanospirillum hungatei JF-1 (strain ATCC 27890 / DSM 864 / NBRC 100397 / JF-1).